Here is a 101-residue protein sequence, read N- to C-terminus: Glutaredoxin-1 (101 aa).

The Glutaredoxin domain maps to 3–101; that stretch reads DSFVQSKLRD…MMLRQIGALV (99 aa). The cysteines at positions 23 and 26 are disulfide-linked.

It belongs to the glutaredoxin family.

The protein localises to the cytoplasm. Its function is as follows. Has a glutathione-disulfide oxidoreductase activity in the presence of NADPH and glutathione reductase. Reduces low molecular weight disulfides and proteins. The polypeptide is Glutaredoxin-1 (GLRX) (Gallus gallus (Chicken)).